The following is a 198-amino-acid chain: Ribonuclease 3-like protein 1 (198 aa).

Over residues 85–110 the composition is skewed to basic and acidic residues; that stretch reads KKLAPKPDEEHTTTTKPISKDDESKT. The interval 85–115 is disordered; sequence KKLAPKPDEEHTTTTKPISKDDESKTRRGSA. In terms of domain architecture, DRBM spans 114 to 191; it reads SAKSVLHEMC…AEGALWYLEH (78 aa).

The polypeptide is Ribonuclease 3-like protein 1 (RTL1) (Arabidopsis thaliana (Mouse-ear cress)).